The primary structure comprises 549 residues: Maturase K (549 aa).

Belongs to the intron maturase 2 family. MatK subfamily.

It localises to the plastid. The protein resides in the chloroplast. Functionally, usually encoded in the trnK tRNA gene intron. Probably assists in splicing its own and other chloroplast group II introns. The polypeptide is Maturase K (Albidella oligococca (Caldesia oligococca)).